The sequence spans 380 residues: Probable dual-specificity RNA methyltransferase RlmN (380 aa).

The Proton acceptor role is filled by glutamate 112. Positions tyrosine 118–glutamate 358 constitute a Radical SAM core domain. Cysteines 125 and 363 form a disulfide. [4Fe-4S] cluster is bound by residues cysteine 132, cysteine 136, and cysteine 139. Residues glycine 187 to glutamate 188, serine 221, serine 244 to histidine 246, and asparagine 320 each bind S-adenosyl-L-methionine. The active-site S-methylcysteine intermediate is the cysteine 363.

This sequence belongs to the radical SAM superfamily. RlmN family. [4Fe-4S] cluster serves as cofactor.

The protein resides in the cytoplasm. The enzyme catalyses adenosine(2503) in 23S rRNA + 2 reduced [2Fe-2S]-[ferredoxin] + 2 S-adenosyl-L-methionine = 2-methyladenosine(2503) in 23S rRNA + 5'-deoxyadenosine + L-methionine + 2 oxidized [2Fe-2S]-[ferredoxin] + S-adenosyl-L-homocysteine. It carries out the reaction adenosine(37) in tRNA + 2 reduced [2Fe-2S]-[ferredoxin] + 2 S-adenosyl-L-methionine = 2-methyladenosine(37) in tRNA + 5'-deoxyadenosine + L-methionine + 2 oxidized [2Fe-2S]-[ferredoxin] + S-adenosyl-L-homocysteine. Specifically methylates position 2 of adenine 2503 in 23S rRNA and position 2 of adenine 37 in tRNAs. The sequence is that of Probable dual-specificity RNA methyltransferase RlmN from Salinispora arenicola (strain CNS-205).